The following is a 212-amino-acid chain: Ras-related protein RABC1 (212 aa).

Glycine 2 is modified (N-acetylglycine). GTP is bound at residue 20–27 (GDSGVGKS). The short motif at 41 to 49 (LSPTIGVDF) is the Effector region element. Residues 67–71 (DTAGQ), 127–130 (NKVD), and 157–158 (SA) each bind GTP. The segment at 182 to 212 (TAEGSSGGKKNIFKQNPAQTTSTSSSYCCSS) is disordered. A compositionally biased stretch (low complexity) spans 201-212 (TTSTSSSYCCSS). Residues cysteine 209 and cysteine 210 are each lipidated (S-geranylgeranyl cysteine).

It belongs to the small GTPase superfamily. Rab family.

It is found in the cell membrane. Its function is as follows. Intracellular vesicle trafficking and protein transport. This is Ras-related protein RABC1 (RABC1) from Arabidopsis thaliana (Mouse-ear cress).